We begin with the raw amino-acid sequence, 44 residues long: Large ribosomal subunit protein bL34 (44 aa).

It belongs to the bacterial ribosomal protein bL34 family.

The chain is Large ribosomal subunit protein bL34 from Variovorax paradoxus (strain S110).